A 49-amino-acid chain; its full sequence is Large ribosomal subunit protein bL33B (49 aa).

The protein belongs to the bacterial ribosomal protein bL33 family.

In Latilactobacillus sakei subsp. sakei (strain 23K) (Lactobacillus sakei subsp. sakei), this protein is Large ribosomal subunit protein bL33B.